The primary structure comprises 179 residues: Bifunctional protein PyrR (179 aa).

The PRPP-binding motif lies at 97–109; sequence IILTDDVLYTGRT.

Belongs to the purine/pyrimidine phosphoribosyltransferase family. PyrR subfamily.

The enzyme catalyses UMP + diphosphate = 5-phospho-alpha-D-ribose 1-diphosphate + uracil. Its function is as follows. Regulates the transcription of the pyrimidine nucleotide (pyr) operon in response to exogenous pyrimidines. In terms of biological role, also displays a weak uracil phosphoribosyltransferase activity which is not physiologically significant. This is Bifunctional protein PyrR from Elusimicrobium minutum (strain Pei191).